Consider the following 91-residue polypeptide: Transcription factor ILI7 (91 aa).

Residues 4–58 (RSRSRASSAARITDEQIGDLVSKLQALLPEARLRSNDRVPSARVLQETCSYIRSL) enclose the bHLH domain.

Belongs to the bHLH protein family.

Functionally, atypical and probable non DNA-binding bHLH transcription factor that integrates multiple signaling pathways to regulate cell elongation and plant development. The chain is Transcription factor ILI7 (ILI7) from Oryza sativa subsp. indica (Rice).